The following is a 249-amino-acid chain: Orotidine 5'-phosphate decarboxylase (249 aa).

Substrate-binding positions include D18, K40, 67–76, T127, R188, Q197, G217, and R218; that span reads DLKYHDIPNT. K69 acts as the Proton donor in catalysis.

The protein belongs to the OMP decarboxylase family. Type 1 subfamily. As to quaternary structure, homodimer.

The enzyme catalyses orotidine 5'-phosphate + H(+) = UMP + CO2. It functions in the pathway pyrimidine metabolism; UMP biosynthesis via de novo pathway; UMP from orotate: step 2/2. Its function is as follows. Catalyzes the decarboxylation of orotidine 5'-monophosphate (OMP) to uridine 5'-monophosphate (UMP). The sequence is that of Orotidine 5'-phosphate decarboxylase from Baumannia cicadellinicola subsp. Homalodisca coagulata.